The following is a 394-amino-acid chain: Elongation factor Tu (394 aa).

The tr-type G domain occupies Lys-10–Val-204. The tract at residues Gly-19 to Thr-26 is G1. Gly-19 to Thr-26 serves as a coordination point for GTP. Position 26 (Thr-26) interacts with Mg(2+). The interval Gly-60–Ser-64 is G2. Residues Asp-81–Gly-84 form a G3 region. GTP contacts are provided by residues Asp-81–His-85 and Asn-136–Asp-139. A G4 region spans residues Asn-136 to Asp-139. Positions Ser-174–Leu-176 are G5.

It belongs to the TRAFAC class translation factor GTPase superfamily. Classic translation factor GTPase family. EF-Tu/EF-1A subfamily. In terms of assembly, monomer.

It is found in the cytoplasm. It catalyses the reaction GTP + H2O = GDP + phosphate + H(+). GTP hydrolase that promotes the GTP-dependent binding of aminoacyl-tRNA to the A-site of ribosomes during protein biosynthesis. This is Elongation factor Tu from Rickettsia parkeri.